Consider the following 437-residue polypeptide: U1 small nuclear ribonucleoprotein 70 kDa (437 aa).

Threonine 2 bears the N-acetylthreonine mark. The interval 48-79 is disordered; it reads FEDPRDAPPPTRAETREERMERKRREKIERRQ. Residues 60–79 show a composition bias toward basic and acidic residues; the sequence is AETREERMERKRREKIERRQ. The required for interaction with U1 RNA stretch occupies residues 92–202; it reads HNDPNAQGDA…GGGLGGTRRG (111 aa). The RRM domain occupies 103-181; sequence KTLFVARVNY…RRVLVDVERG (79 aa). Lysine 118 carries the N6-acetyllysine modification. A Phosphotyrosine modification is found at tyrosine 126. Residues 187-437 are disordered; it reads WRPRRLGGGL…NGYLMEAAPE (251 aa). The segment covering 192 to 201 has biased composition (gly residues); it reads LGGGLGGTRR. Basic and acidic residues predominate over residues 207–254; it reads NIRHSGRDDTSRYDERPGPSPLPHRDRDRDRERERRERSRERDKERER. Phosphoserine is present on residues serine 226 and serine 268. Basic residues predominate over residues 255–268; it reads RRSRSRDRRRRSRS. Basic and acidic residues-rich tracts occupy residues 269–286 and 294–310; these read RDKE…DKDR and RSRE…EELR. Serine 320 is modified (phosphoserine). Residues 343 to 393 are compositionally biased toward basic and acidic residues; the sequence is PEEKGRDRDRERRRSHRSERERRRDRDRDRDRDREHKRGERGSERGRDEAR. Lysine 346 participates in a covalent cross-link: Glycyl lysine isopeptide (Lys-Gly) (interchain with G-Cter in SUMO2). The residue at position 410 (serine 410) is a Phosphoserine.

In terms of assembly, component of the U1 snRNP. The U1 snRNP is composed of the U1 snRNA and the 7 core Sm proteins SNRPB, SNRPD1, SNRPD2, SNRPD3, SNRPE, SNRPF and SNRPG that assemble in a heptameric protein ring on the Sm site of the small nuclear RNA to form the core snRNP, and at least three U1 snRNP-specific proteins SNRNP70/U1-70K, SNRPA/U1-A and SNRPC/U1-C. Interacts with SCNM1. Found in a pre-mRNA splicing complex with SFRS4, SFRS5, SNRNP70, SNRPA1, SRRM1 and SRRM2. Found in a pre-mRNA exonic splicing enhancer (ESE) complex with SNRNP70, SNRPA1, SRRM1 and TRA2B/SFRS10. Interacts with dephosphorylated SFRS13A and SFPQ. Interacts with NUDT21/CPSF5, CPSF6, SCAF11, and ZRANB2. Interacts with GEMIN5. Interacts with FUS. Post-translationally, the N-terminus is blocked. In terms of processing, extensively phosphorylated on serine residues in the C-terminal region.

Its subcellular location is the nucleus speckle. The protein localises to the nucleus. It is found in the nucleoplasm. Component of the spliceosomal U1 snRNP, which is essential for recognition of the pre-mRNA 5' splice-site and the subsequent assembly of the spliceosome. SNRNP70 binds to the loop I region of U1-snRNA. Its function is as follows. Truncated isoforms that lack the RRM domain cannot bind U1-snRNA. The protein is U1 small nuclear ribonucleoprotein 70 kDa (SNRNP70) of Homo sapiens (Human).